Consider the following 224-residue polypeptide: PKHD-type hydroxylase Tgr7_2199 (224 aa).

Residues 78 to 176 (KLSGAFFARY…RLVAVAWAES (99 aa)) form the Fe2OG dioxygenase domain. Fe cation is bound by residues His-96, Asp-98, and His-157. Arg-167 is a binding site for 2-oxoglutarate.

Fe(2+) serves as cofactor. The cofactor is L-ascorbate.

This is PKHD-type hydroxylase Tgr7_2199 from Thioalkalivibrio sulfidiphilus (strain HL-EbGR7).